The following is a 149-amino-acid chain: Large ribosomal subunit protein uL13 (149 aa).

It belongs to the universal ribosomal protein uL13 family. Part of the 50S ribosomal subunit.

In terms of biological role, this protein is one of the early assembly proteins of the 50S ribosomal subunit, although it is not seen to bind rRNA by itself. It is important during the early stages of 50S assembly. In Pelodictyon phaeoclathratiforme (strain DSM 5477 / BU-1), this protein is Large ribosomal subunit protein uL13.